A 347-amino-acid chain; its full sequence is Nicotinate-nucleotide--dimethylbenzimidazole phosphoribosyltransferase (347 aa).

Catalysis depends on E316, which acts as the Proton acceptor.

The protein belongs to the CobT family.

The catalysed reaction is 5,6-dimethylbenzimidazole + nicotinate beta-D-ribonucleotide = alpha-ribazole 5'-phosphate + nicotinate + H(+). Its pathway is nucleoside biosynthesis; alpha-ribazole biosynthesis; alpha-ribazole from 5,6-dimethylbenzimidazole: step 1/2. Its function is as follows. Catalyzes the synthesis of alpha-ribazole-5'-phosphate from nicotinate mononucleotide (NAMN) and 5,6-dimethylbenzimidazole (DMB). This Vibrio parahaemolyticus serotype O3:K6 (strain RIMD 2210633) protein is Nicotinate-nucleotide--dimethylbenzimidazole phosphoribosyltransferase.